Reading from the N-terminus, the 308-residue chain is uncharacterized protein (308 aa).

The region spanning 1–60 is the HTH lysR-type domain; that stretch reads MNYSLKQLKVFVTVAQEKSFSRAGERIGLSQSAVSHSVKELENHTGVRLLDRTTREVVLT. The H-T-H motif DNA-binding region spans 20–39; sequence FSRAGERIGLSQSAVSHSVK.

This sequence belongs to the LysR transcriptional regulatory family.

This is an uncharacterized protein from Shigella flexneri.